The primary structure comprises 152 residues: Vasotocin-neurophysin VT 1 (152 aa).

A signal peptide spans 1 to 19 (MSDSFLPTCILCLLALSSA). C20 and C25 are disulfide-bonded. G28 is subject to Glycine amide. 7 disulfides stabilise this stretch: C40-C84, C43-C57, C51-C74, C58-C64, C91-C103, C97-C115, and C104-C109.

This sequence belongs to the vasopressin/oxytocin family.

It is found in the secreted. In terms of biological role, vasotocin is an antidiuretic hormone. The polypeptide is Vasotocin-neurophysin VT 1 (Catostomus commersonii (White sucker)).